The primary structure comprises 160 residues: Troponin C, skeletal muscle (160 aa).

Threonine 2 is modified (N-acetylthreonine). 4 EF-hand domains span residues 15-50 (EMIAEFKAAFDMFDADGGGDISVKELGTVMRMLGQT), 51-86 (PTKEELDAIIEEVDEDGSGTIDFEEFLVMMVRQMKE), 91-126 (KSEEELAECFRIFDRNADGYIDPEELAEIFRASGEH), and 127-160 (VTDEEIESLMKDGDKNNDGRIDFDEFLKMMEGVQ). Residues aspartate 28, aspartate 30, aspartate 34, glutamate 39, aspartate 64, aspartate 66, serine 68, threonine 70, glutamate 75, aspartate 104, asparagine 106, aspartate 108, tyrosine 110, glutamate 115, aspartate 140, asparagine 142, aspartate 144, arginine 146, and glutamate 151 each coordinate Ca(2+).

This sequence belongs to the troponin C family.

Its function is as follows. Troponin is the central regulatory protein of striated muscle contraction. Tn consists of three components: Tn-I which is the inhibitor of actomyosin ATPase, Tn-T which contains the binding site for tropomyosin and Tn-C. The binding of calcium to Tn-C abolishes the inhibitory action of Tn on actin filaments. The sequence is that of Troponin C, skeletal muscle (TNNC2) from Homo sapiens (Human).